The following is a 441-amino-acid chain: Probable cytosolic Fe-S cluster assembly factor v1g210509 (441 aa).

[4Fe-4S] cluster is bound by residues Cys24, Cys72, Cys75, Cys78, Cys196, Cys252, and Cys401.

Belongs to the NARF family.

Its function is as follows. Component of the cytosolic iron-sulfur (Fe/S) protein assembly machinery. Required for maturation of extramitochondrial Fe/S proteins. This is Probable cytosolic Fe-S cluster assembly factor v1g210509 from Nematostella vectensis (Starlet sea anemone).